Reading from the N-terminus, the 1129-residue chain is Serine/threonine-protein kinase 11-interacting protein (1129 aa).

8 LRR repeats span residues 107-128 (SLRSLELRCLPPHCLRGLRSVY), 130-150 (QLEVLTCYRCVSSLEEVIALC), 162-183 (VLHTLDFSYNTLKNLDGSLELL), 185-206 (SLKILDLSHNQITECGSYLKVL), 208-229 (ELQYLNLGYNHLTAVPELSVGN), 232-253 (KLHSLILKHNQLSGTSGLENLP), 254-275 (NLQHLDLSYNLLLEHSQLSGLA), and 279-300 (NLKQLFLEGNPLYFQKDYRALT). Disordered stretches follow at residues 335-392 (RLQP…RRGQ), 428-475 (DPEY…HVAP), 654-678 (GDIYSPESLQQGKEPTAGLHRNHTG), and 696-724 (NPTGETSTPLRPLSAEPPQGDDGGGGLAA). Polar residues predominate over residues 337–355 (QPSSSATESSCTGDLTDSY). The span at 365–374 (LPRKKSRVKV) shows a compositional bias: basic residues. Residues 381 to 391 (ERSDSEYERRG) show a composition bias toward basic and acidic residues. Residues 436 to 447 (HSPPPRASPSPT) show a composition bias toward pro residues. Over residues 448 to 458 (APSSVPKQKSP) the composition is skewed to low complexity.

This sequence belongs to the STK11IP family.

It localises to the cytoplasm. This chain is Serine/threonine-protein kinase 11-interacting protein (stk11ip), found in Xenopus tropicalis (Western clawed frog).